We begin with the raw amino-acid sequence, 357 residues long: Probable cinnamyl alcohol dehydrogenase (357 aa).

C47 contributes to the Zn(2+) binding site. Residue S49 participates in NADP(+) binding. Zn(2+)-binding residues include H69, E70, C100, C103, C106, C114, and C163. NADP(+)-binding positions include T167, 188-193 (GLGGVG), 211-216 (SSSDKK), T251, G275, and 298-300 (SFI).

This sequence belongs to the zinc-containing alcohol dehydrogenase family. Homodimer. Zn(2+) is required as a cofactor.

It carries out the reaction (E)-cinnamyl alcohol + NADP(+) = (E)-cinnamaldehyde + NADPH + H(+). It catalyses the reaction (E)-coniferol + NADP(+) = (E)-coniferaldehyde + NADPH + H(+). The enzyme catalyses (E)-sinapyl alcohol + NADP(+) = (E)-sinapaldehyde + NADPH + H(+). The catalysed reaction is (E)-4-coumaroyl alcohol + NADP(+) = (E)-4-coumaraldehyde + NADPH + H(+). It carries out the reaction (E)-caffeyl alcohol + NADP(+) = (E)-caffeyl aldehyde + NADPH + H(+). The protein operates within aromatic compound metabolism; phenylpropanoid biosynthesis. Its function is as follows. Involved in lignin biosynthesis. Catalyzes the final step specific for the production of lignin monomers. Catalyzes the NADPH-dependent reduction of coniferaldehyde, 5-hydroxyconiferaldehyde, sinapaldehyde, 4-coumaraldehyde and caffeyl aldehyde to their respective alcohols. This Pinus taeda (Loblolly pine) protein is Probable cinnamyl alcohol dehydrogenase.